Reading from the N-terminus, the 283-residue chain is 4-diphosphocytidyl-2-C-methyl-D-erythritol kinase (283 aa).

The active site involves lysine 10. 99 to 109 (PMGGGLGGGSS) is an ATP binding site. Aspartate 141 is a catalytic residue.

This sequence belongs to the GHMP kinase family. IspE subfamily. In terms of assembly, homodimer.

It catalyses the reaction 4-CDP-2-C-methyl-D-erythritol + ATP = 4-CDP-2-C-methyl-D-erythritol 2-phosphate + ADP + H(+). The protein operates within isoprenoid biosynthesis; isopentenyl diphosphate biosynthesis via DXP pathway; isopentenyl diphosphate from 1-deoxy-D-xylulose 5-phosphate: step 3/6. Functionally, catalyzes the phosphorylation of the position 2 hydroxy group of 4-diphosphocytidyl-2C-methyl-D-erythritol. The chain is 4-diphosphocytidyl-2-C-methyl-D-erythritol kinase from Escherichia coli (strain 55989 / EAEC).